Reading from the N-terminus, the 161-residue chain is Pleiotrophin-A (161 aa).

A signal peptide spans 1–23 (MRHQHGLFMLALLAFLFVITVLG). Disulfide bonds link Cys41/Cys70, Cys49/Cys79, Cys56/Cys83, Cys93/Cys125, and Cys103/Cys135. Chondroitin sulfate binding regions lie at residues 86-93 (KKQFGAEC) and 117-125 (KRALHNAEC). A disordered region spans residues 136-161 (GKVTKPKLQESKKKKKEGKNKEKLLD). The segment at 141-161 (PKLQESKKKKKEGKNKEKLLD) is chondroitin sulfate A binding.

This sequence belongs to the pleiotrophin family. Expressed in high levels in brain and eye. Lower levels in bone. In the tailbud embryo stage, it is expressed exclusively in the central nervous system, especially in the hind region of the brain.

Its subcellular location is the secreted. Its function is as follows. Secreted growth factor that mediates its signal through cell-surface proteoglycan and non-proteoglycan receptors. Binds cell-surface proteoglycan receptor via their chondroitin sulfate (CS) groups. Thereby regulates many processes like cell proliferation, cell survival, cell growth, cell differentiation and cell migration. Has antibacterial activity against both Gram-positive and Gram-negative bacteria. This Xenopus laevis (African clawed frog) protein is Pleiotrophin-A (ptn-a).